We begin with the raw amino-acid sequence, 242 residues long: ATP synthase subunit a (242 aa).

Helical transmembrane passes span 29-49 (SSIY…LAFY), 84-104 (FIPL…LGMT), 114-134 (IIVT…VGFV), 140-160 (FLTL…MIVI), 189-209 (VIAG…IPLM), and 210-230 (MILI…FTIL).

It belongs to the ATPase A chain family. F-type ATPases have 2 components, CF(1) - the catalytic core - and CF(0) - the membrane proton channel. CF(1) has five subunits: alpha(3), beta(3), gamma(1), delta(1), epsilon(1). CF(0) has three main subunits: a(1), b(2) and c(9-12). The alpha and beta chains form an alternating ring which encloses part of the gamma chain. CF(1) is attached to CF(0) by a central stalk formed by the gamma and epsilon chains, while a peripheral stalk is formed by the delta and b chains.

It is found in the cell inner membrane. Its function is as follows. Key component of the proton channel; it plays a direct role in the translocation of protons across the membrane. This Rickettsia massiliae (strain Mtu5) protein is ATP synthase subunit a.